Reading from the N-terminus, the 102-residue chain is Neuropeptide F (102 aa).

A signal peptide spans 1–29; it reads MSNTMRCILIVCVALTLIAAGCNVEASNS. A propeptide spanning residues 30 to 32 is cleaved from the precursor; sequence RPP. Position 62 is a phenylalanine amide (phenylalanine 62). The propeptide occupies 66 to 102; it reads GGPLMEMLRNRELENNMAKSINSGGELIRALDEEEVF.

The protein belongs to the NPY family.

The protein resides in the secreted. Its function is as follows. An integral part of the sensory system that mediates food signaling, providing the neural basis for the regulation of food response; coordinates larval foraging and social behavior changes during development. May have a hormonal role in females. The chain is Neuropeptide F from Drosophila pseudoobscura pseudoobscura (Fruit fly).